A 317-amino-acid chain; its full sequence is uncharacterized protein (317 aa).

The span at Met1–Gly11 shows a compositional bias: basic and acidic residues. The segment at Met1–Ala164 is disordered. The segment covering Gly19 to Glu34 has biased composition (polar residues). 2 stretches are compositionally biased toward basic and acidic residues: residues His47 to Arg58 and Glu71 to Pro92. 2 stretches are compositionally biased toward basic residues: residues Arg100–Val110 and Lys151–Ser161.

This is an uncharacterized protein from Homo sapiens (Human).